A 37-amino-acid chain; its full sequence is Large ribosomal subunit protein bL36 (37 aa).

Belongs to the bacterial ribosomal protein bL36 family.

This Desulfotalea psychrophila (strain LSv54 / DSM 12343) protein is Large ribosomal subunit protein bL36.